The sequence spans 181 residues: Shikimate kinase 2 (181 aa).

Gly12–Thr17 is an ATP binding site. Mg(2+) is bound by residues Thr16 and Asp32. Substrate is bound by residues Asp34, Arg58, and Gly79. The tract at residues Glu112–Lys126 is LID domain. Arg120 is a binding site for ATP. Arg139 provides a ligand contact to substrate.

The protein belongs to the shikimate kinase family. AroL subfamily. As to quaternary structure, monomer. Mg(2+) is required as a cofactor.

The protein localises to the cytoplasm. It catalyses the reaction shikimate + ATP = 3-phosphoshikimate + ADP + H(+). It participates in metabolic intermediate biosynthesis; chorismate biosynthesis; chorismate from D-erythrose 4-phosphate and phosphoenolpyruvate: step 5/7. Functionally, catalyzes the specific phosphorylation of the 3-hydroxyl group of shikimic acid using ATP as a cosubstrate. This chain is Shikimate kinase 2, found in Salmonella enteritidis PT4 (strain P125109).